A 351-amino-acid polypeptide reads, in one-letter code: LIM/homeobox protein ceh-14 (351 aa).

LIM zinc-binding domains follow at residues 46–105 and 105–169; these read AICS…KFGT and TKCS…ARDK. The segment at residues 180-239 is a DNA-binding region (homeobox); sequence NKRPRTTISAKSLETLKQAYQTSSKPARHVREQLASETGLDMRVVQVWFQNRRAKEKRLK. A compositionally biased stretch (basic and acidic residues) spans 238 to 254; the sequence is LKKDAGRRWKSSNRAES. The segment at 238 to 268 is disordered; it reads LKKDAGRRWKSSNRAESDSNSPIESINGQSP. Over residues 255-268 the composition is skewed to polar residues; that stretch reads DSNSPIESINGQSP.

Interacts (via LIM zinc-binding domains 1 and 2) with lim-7 (via LID domain). May interact with itself. May interact with homeobox protein ceh-63. As to expression, expressed in the anterior AFDL/R sensory neurons and BDUL/R and ALA interneurons, and in PVT, PVQL/R, DVC, PVNL/R, PVWL/R, PVR, PHCL/R, PHAL/R and PHBL/R cells in the tail region.

Its subcellular location is the nucleus. Functionally, probable transcription factor, modulating expression of helix-loop-helix protein mbr-1 and homeobox protein ceh-63, perhaps acting in concert with ceh-63. Binds to a motif including the sequence 5'-CTAAT-3' in regulatory promoter elements. Confers thermosensory function to neurons. Required for correct AFD-mediated thermotaxis. In concert with homeobox protein ttx-1, perhaps as components in a complex, specifies identity of AFD neurons, acting by synergistically regulating receptor-type guanylyl cyclase gcy-8, gcy-18 and other genes. Involved in postembryonic differentiation of the ALA neuron, and regulation of genes that contribute to behavioral quiescence, a sleep-like behavior mediated by ALA. Regulates its own expression and also that of homeodomain ceh-17, together forming an autoregulatory loop in the ALA neuron. Required for initial pathfinding of the ALA axons, but largely dispensable for axon migration. Involved in regulating postembryonic axon maintenance in the ventral nerve cord, acting in concert with LIM homeobox protein lim-6, via modulation of expression of immunoglobulin domain zig genes in the interneuron PVT. Plays a role in controlling the peptidergic identity of the BDU neurons, regulating expression of flp-10, nlp-1, and nlp-15, thereby modulating the harsh touch response. The chain is LIM/homeobox protein ceh-14 (ceh-14) from Caenorhabditis elegans.